A 116-amino-acid polypeptide reads, in one-letter code: Large ribosomal subunit protein uL18 (116 aa).

It belongs to the universal ribosomal protein uL18 family. In terms of assembly, part of the 50S ribosomal subunit; part of the 5S rRNA/L5/L18/L25 subcomplex. Contacts the 5S and 23S rRNAs.

In terms of biological role, this is one of the proteins that bind and probably mediate the attachment of the 5S RNA into the large ribosomal subunit, where it forms part of the central protuberance. The chain is Large ribosomal subunit protein uL18 from Ectopseudomonas mendocina (strain ymp) (Pseudomonas mendocina).